A 194-amino-acid polypeptide reads, in one-letter code: Adenylate kinase (194 aa).

Residue 8–16 coordinates ATP; the sequence is GIPGVGKST.

It belongs to the archaeal adenylate kinase family. Homotrimer.

Its subcellular location is the cytoplasm. The catalysed reaction is AMP + ATP = 2 ADP. This is Adenylate kinase (adkA) from Sulfolobus acidocaldarius (strain ATCC 33909 / DSM 639 / JCM 8929 / NBRC 15157 / NCIMB 11770).